Consider the following 346-residue polypeptide: 26S proteasome non-ATPase regulatory subunit 4 (346 aa).

Residues 5-190 (STMICVDNSE…LTDALLQSSV (186 aa)) form the VWFA domain. UIM domains are found at residues 216 to 235 (ENDP…ERAR) and 273 to 292 (TEEQ…NAPA). The disordered stretch occupies residues 290–346 (APAEQPQVQHEQMDVDGAPAVGGDNLDDLMNNPELLQQIVDDLPAANAEKDDDKEKK). The segment covering 337–346 (AEKDDDKEKK) has biased composition (basic and acidic residues).

Belongs to the proteasome subunit S5A family. In terms of assembly, the 26S proteasome is composed of a core protease, known as the 20S proteasome, capped at one or both ends by the 19S regulatory complex (RC). The RC is composed of at least 18 different subunits in two subcomplexes, the base and the lid, which form the portions proximal and distal to the 20S proteolytic core, respectively. Broadly expressed with high expression in the pharynx, intestine, hypodermis and spermatheca and weak expression in the excretory cell, body wall muscle, vulva and somatic gonad.

The protein localises to the cytoplasm. It is found in the nucleus. In terms of biological role, binds and presumably selects ubiquitin-conjugates for destruction. Required for protein degradation and ubiquitin-proteasome system (UBS) function and regulates proteasomal subunit expression. Involvement in UBS might be cell type specific. Regulator of the autophagy-lysosome pathway that may confer resistance to autophagy by regulating the expression of autophagy-related proteins such as lgg-1, and by regulating lysosome formation, possibly by modulating elt-2 activity. Required for fertility, sperm production, and sex determination through regulation of tra-2 protein. Plays a role in the elimination of paternal mitochondria in fertilized eggs. The sequence is that of 26S proteasome non-ATPase regulatory subunit 4 from Caenorhabditis elegans.